Here is a 148-residue protein sequence, read N- to C-terminus: uncharacterized protein (148 aa).

A compositionally biased stretch (low complexity) spans 37–94 (NNNNYNNNNKNNNNNNNNNNNNNNNNNNNNNNNYINSCNSNNNNNNNNNNTKNNNINS). The tract at residues 37–99 (NNNNYNNNNK…NNINSRTDKN (63 aa)) is disordered.

This is an uncharacterized protein from Dictyostelium discoideum (Social amoeba).